Consider the following 195-residue polypeptide: Phosphoheptose isomerase (195 aa).

An SIS domain is found at 35–195 (LCVALYRGDK…EKEIFGDGVN (161 aa)). Substrate is bound at residue 51–53 (NGG). Positions 60 and 64 each coordinate Zn(2+). Substrate contacts are provided by residues Glu64, 93 to 94 (ND), 119 to 121 (STS), Ser124, and Gln171. Zn(2+) is bound by residues Gln171 and His179.

This sequence belongs to the SIS family. GmhA subfamily. Homotetramer. It depends on Zn(2+) as a cofactor.

The protein resides in the cytoplasm. It carries out the reaction 2 D-sedoheptulose 7-phosphate = D-glycero-alpha-D-manno-heptose 7-phosphate + D-glycero-beta-D-manno-heptose 7-phosphate. Its pathway is carbohydrate biosynthesis; D-glycero-D-manno-heptose 7-phosphate biosynthesis; D-glycero-alpha-D-manno-heptose 7-phosphate and D-glycero-beta-D-manno-heptose 7-phosphate from sedoheptulose 7-phosphate: step 1/1. Catalyzes the isomerization of sedoheptulose 7-phosphate in D-glycero-D-manno-heptose 7-phosphate. In Sulfurimonas denitrificans (strain ATCC 33889 / DSM 1251) (Thiomicrospira denitrificans (strain ATCC 33889 / DSM 1251)), this protein is Phosphoheptose isomerase.